The chain runs to 506 residues: Allantoinase (506 aa).

6 residues coordinate Zn(2+): His105, His107, Lys195, His231, His292, and Asp366. N6-carboxylysine is present on Lys195.

The protein belongs to the metallo-dependent hydrolases superfamily. Allantoinase family. As to quaternary structure, homotetramer. Zn(2+) is required as a cofactor. Carboxylation allows a single lysine to coordinate two zinc ions.

It carries out the reaction (S)-allantoin + H2O = allantoate + H(+). It participates in nitrogen metabolism; (S)-allantoin degradation; allantoate from (S)-allantoin: step 1/1. Catalyzes the conversion of allantoin (5-ureidohydantoin) to allantoate by hydrolytic cleavage of the five-member hydantoin ring. Catalyzes the first step of the ureide allantoin degradation followed by the sequential activity of AAH, UGLYAH and UAH which allows a complete purine breakdown without the intermediate generation of urea. The sequence is that of Allantoinase (ALN) from Arabidopsis thaliana (Mouse-ear cress).